The sequence spans 663 residues: Beta-galactosidase YesZ (663 aa).

Arginine 107 is a substrate binding site. Cysteine 111 lines the Zn(2+) pocket. Residue asparagine 145 participates in substrate binding. Glutamate 146 functions as the Proton donor in the catalytic mechanism. The Zn(2+) site is built by cysteine 154, cysteine 156, and cysteine 159. Glutamate 297 acts as the Nucleophile in catalysis. 346–349 (EQPH) is a substrate binding site.

Belongs to the glycosyl hydrolase 42 family. Homotrimer.

It carries out the reaction Hydrolysis of terminal non-reducing beta-D-galactose residues in beta-D-galactosides.. Its function is as follows. May play a role in the degradation of rhamnogalacturonan derived from plant cell walls. The polypeptide is Beta-galactosidase YesZ (yesZ) (Bacillus licheniformis (strain ATCC 14580 / DSM 13 / JCM 2505 / CCUG 7422 / NBRC 12200 / NCIMB 9375 / NCTC 10341 / NRRL NRS-1264 / Gibson 46)).